Here is a 545-residue protein sequence, read N- to C-terminus: Chaperonin GroEL 1 (545 aa).

ATP contacts are provided by residues 30–33 (TLGP), K51, 87–91 (DGTTT), G415, and D495.

This sequence belongs to the chaperonin (HSP60) family. In terms of assembly, forms a cylinder of 14 subunits composed of two heptameric rings stacked back-to-back. Interacts with the co-chaperonin GroES.

It localises to the cytoplasm. It catalyses the reaction ATP + H2O + a folded polypeptide = ADP + phosphate + an unfolded polypeptide.. Together with its co-chaperonin GroES, plays an essential role in assisting protein folding. The GroEL-GroES system forms a nano-cage that allows encapsulation of the non-native substrate proteins and provides a physical environment optimized to promote and accelerate protein folding. The chain is Chaperonin GroEL 1 from Rhizobium meliloti (strain 1021) (Ensifer meliloti).